The sequence spans 274 residues: Glutamate racemase (274 aa).

Substrate is bound by residues 9 to 10 (DS) and 41 to 42 (YG). The active-site Proton donor/acceptor is Cys73. Substrate is bound at residue 74–75 (NT). Cys183 (proton donor/acceptor) is an active-site residue. Residue 184–185 (TH) participates in substrate binding.

The protein belongs to the aspartate/glutamate racemases family.

It catalyses the reaction L-glutamate = D-glutamate. It participates in cell wall biogenesis; peptidoglycan biosynthesis. Provides the (R)-glutamate required for cell wall biosynthesis. The chain is Glutamate racemase from Shewanella baltica (strain OS223).